The sequence spans 145 residues: uncharacterized protein (145 aa).

It to B.subtilis XkdJ.

This is an uncharacterized protein from Bacillus subtilis (strain 168).